Consider the following 523-residue polypeptide: MILDAAIVALADLPGTWELIVPNAGIASMHTAVTRYGTVVLLDRTNIGPSRKMLPKGHCRYDPKDEVLKRDCYAHSVILDLNTNKIRPLKILTDTWCSSGQFLPDGSLLQTGGDLDGVKKIRKFVPCGPHGFCDWEELKDVELETGRWYATNQILPDGSVIIVGGRAANSVEYYPPRKGGAVQLPFLSDVEDKQMDNLYPYVHLLPNGHLFIFANNKAVMYDYTSNKVMLEYPPLDGGPRNYPSAGSSVMLALEGDYSMAIIVVCGGAQFGAFIQKSTDTPAHGSCGRIVATSPHPVWEMEDMPFGRIMGDMVMLPTGDVLIINGAQAGSQGFELASSPCFFPLLYRPNQPLGLRFMTLTPGTVPRMYHSTANLLPDGRVLIAGSNPHYFYKFAAEFPTELRIEAFSPEYLFADKANIRPVIDESPEMVRFGEQFDVFVSVSLPVVGSMEVNLASAPFATHSFSQGQRLVKLTVSPTVPDADERYRIVCTAPPGGKIAPPGYYMMFAVNLGVPSVARWVQLVP.

Positions 1–19 (MILDAAIVALADLPGTWEL) are cleaved as a signal peptide.

It localises to the secreted. It is found in the cell wall. The catalysed reaction is an aldehyde + O2 + H2O = a carboxylate + H2O2 + H(+). In terms of biological role, catalyzes the oxidation of aldehydes to the corresponding carboxylate by coupling the reaction to the reduction of dioxygen to hydrogen peroxide. Substrates include glyoxal and other aldehydes. Involved in disease resistance against the grapevine powdery mildew E.necator. Is sufficient to confer disease resistance to E.necator. Can produce hydrogen peroxide in response to E.necator infection, and this may directly play a role in the defense mechanism during plant-pathogen interactions. This Vitis pseudoreticulata (Chinese wild grapevine) protein is Aldehyde oxidase GLOX.